Reading from the N-terminus, the 118-residue chain is MPFVELETNLPASRIPAGLENRLCAATATILDKPEDRVSVTIRPGMTLLMNKSTEPCAHLLVSSIGVVGTAEQNRTHSASFFKFLTEELSLDQDRIVIRFFPLEAWQIGKKGTVMTFL.

P2 is subject to N-acetylproline. K33 carries the N6-acetyllysine modification. S90 carries the post-translational modification Phosphoserine.

The protein belongs to the MIF family. In terms of assembly, homotrimer.

It localises to the cytoplasm. The catalysed reaction is D-dopachrome + H(+) = 5,6-dihydroxyindole + CO2. Tautomerization of D-dopachrome with decarboxylation to give 5,6-dihydroxyindole (DHI). This Mus musculus (Mouse) protein is D-dopachrome decarboxylase (Ddt).